Here is a 213-residue protein sequence, read N- to C-terminus: Small ribosomal subunit protein uS4 (213 aa).

Positions 16–53 are disordered; that stretch reads GTDLGLKSGVKPYDVKTKKSARPPGQHGVSRNKSSEYS. Residues 44 to 53 are compositionally biased toward polar residues; sequence VSRNKSSEYS. One can recognise an S4 RNA-binding domain in the interval 97-163; it reads SRLDNVVYRM…EKSREQLRIK (67 aa).

It belongs to the universal ribosomal protein uS4 family. As to quaternary structure, part of the 30S ribosomal subunit. Contacts protein S5. The interaction surface between S4 and S5 is involved in control of translational fidelity.

One of the primary rRNA binding proteins, it binds directly to 16S rRNA where it nucleates assembly of the body of the 30S subunit. Functionally, with S5 and S12 plays an important role in translational accuracy. The chain is Small ribosomal subunit protein uS4 from Psychrobacter arcticus (strain DSM 17307 / VKM B-2377 / 273-4).